We begin with the raw amino-acid sequence, 207 residues long: Vexin (207 aa).

Residues 56–100 are disordered; that stretch reads ELLPHRGDRRDPGDRRRFGRLQTARPPTAHPAKASARPVGISEPK. A compositionally biased stretch (basic and acidic residues) spans 58 to 71; it reads LPHRGDRRDPGDRR.

This sequence belongs to the vexin family.

Its subcellular location is the cell membrane. It localises to the nucleus. Required for neurogenesis in the neural plate and retina. Strongly cooperates with neural bHLH factors to promote neurogenesis. This is Vexin from Homo sapiens (Human).